Here is a 509-residue protein sequence, read N- to C-terminus: 3-ketoacyl-CoA synthase 11 (509 aa).

Helical transmembrane passes span 36-56 (LITH…AAQI) and 75-95 (LISV…YFMT). Positions 92-381 (YFMTRPRPVY…FFATLVGRKL (290 aa)) constitute an FAE domain. Residues Cys-236, His-315, His-399, His-403, and Asn-436 contribute to the active site.

It belongs to the thiolase-like superfamily. Chalcone/stilbene synthases family. In terms of tissue distribution, only expressed in guard cells. Expressed in siliques, flowers, leaves, stems, roots and seedlings.

The protein localises to the membrane. It carries out the reaction a very-long-chain acyl-CoA + malonyl-CoA + H(+) = a very-long-chain 3-oxoacyl-CoA + CO2 + CoA. It participates in lipid metabolism; fatty acid biosynthesis. Functionally, active on both saturated and mono-unsaturated acyl chains C16 to C20. In Arabidopsis thaliana (Mouse-ear cress), this protein is 3-ketoacyl-CoA synthase 11.